We begin with the raw amino-acid sequence, 96 residues long: MAQIKLTPEELRSSAQKYTAGSQQVTEVLNLLTQEQAVIDENWDGSTFDSFEAQFNELSPKITEFAQLLEDINQQLLKVADIIEQTDADIASQISG.

It belongs to the WXG100 family. sagEsxA-like subfamily. In terms of assembly, homodimer.

The polypeptide is ESAT-6-like protein SAG1039 (Streptococcus agalactiae serotype V (strain ATCC BAA-611 / 2603 V/R)).